Reading from the N-terminus, the 454-residue chain is tRNA modification GTPase MnmE (454 aa).

Positions 23, 80, and 120 each coordinate (6S)-5-formyl-5,6,7,8-tetrahydrofolate. In terms of domain architecture, TrmE-type G spans Gly216–Gly377. A K(+)-binding site is contributed by Asn226. GTP-binding positions include Asn226–Ser231, Thr245–Thr251, Asp270–Gly273, Asn335–Asp338, and Ser358–Arg360. A Mg(2+)-binding site is contributed by Ser230. Positions 245, 247, and 250 each coordinate K(+). Mg(2+) is bound at residue Thr251. A (6S)-5-formyl-5,6,7,8-tetrahydrofolate-binding site is contributed by Lys454.

Belongs to the TRAFAC class TrmE-Era-EngA-EngB-Septin-like GTPase superfamily. TrmE GTPase family. As to quaternary structure, homodimer. Heterotetramer of two MnmE and two MnmG subunits. K(+) is required as a cofactor.

The protein resides in the cytoplasm. In terms of biological role, exhibits a very high intrinsic GTPase hydrolysis rate. Involved in the addition of a carboxymethylaminomethyl (cmnm) group at the wobble position (U34) of certain tRNAs, forming tRNA-cmnm(5)s(2)U34. In Enterobacter sp. (strain 638), this protein is tRNA modification GTPase MnmE.